Reading from the N-terminus, the 841-residue chain is Chitin synthase 1 (841 aa).

The span at 1–13 (MNPGQKQEHDQYP) shows a compositional bias: basic and acidic residues. The segment at 1 to 98 (MNPGQKQEHD…YGEAPRRQPR (98 aa)) is disordered. Residues 76–85 (PPQPMGPPSP) show a composition bias toward pro residues. 9 helical membrane-spanning segments follow: residues 302–322 (WFFQAFGPVINPNVCVLIDVG), 385–405 (SVFGYISVLPGAFSAYRFTAL), 526–546 (LIFSWFALGNFYLTFYILTSA), 564–584 (ILHTILNYIYILLIIVQFILA), 602–622 (FFAILMVYMMFATIWITVVGV), 644–664 (NIIISIVSTYAMYFIASFLFF), 673–693 (FIQYIFLSPSYTNILNIYAFC), 778–798 (VISWIISNLILVVLITNENIL), and 816–836 (LWSVAGLSAIRFCGSGLYLIF).

It belongs to the chitin synthase family.

The protein resides in the cell membrane. It catalyses the reaction [(1-&gt;4)-N-acetyl-beta-D-glucosaminyl](n) + UDP-N-acetyl-alpha-D-glucosamine = [(1-&gt;4)-N-acetyl-beta-D-glucosaminyl](n+1) + UDP + H(+). Polymerizes chitin, a structural polymer of the cell wall and septum, by transferring the sugar moiety of UDP-GlcNAc to the non-reducing end of the growing chitin polymer. The polypeptide is Chitin synthase 1 (chs1) (Phycomyces blakesleeanus (strain ATCC 8743b / DSM 1359 / FGSC 10004 / NBRC 33097 / NRRL 1555)).